Consider the following 103-residue polypeptide: Small ribosomal subunit protein uS10 (103 aa).

This sequence belongs to the universal ribosomal protein uS10 family. As to quaternary structure, part of the 30S ribosomal subunit.

Its function is as follows. Involved in the binding of tRNA to the ribosomes. This chain is Small ribosomal subunit protein uS10, found in Neisseria gonorrhoeae (strain ATCC 700825 / FA 1090).